The sequence spans 132 residues: NADPH-dependent 7-cyano-7-deazaguanine reductase (132 aa).

Cys-48 (thioimide intermediate) is an active-site residue. Asp-55 (proton donor) is an active-site residue. Substrate is bound by residues 70–72 and 89–90; these read LEL and ME.

Belongs to the GTP cyclohydrolase I family. QueF type 1 subfamily.

The protein resides in the cytoplasm. The enzyme catalyses 7-aminomethyl-7-carbaguanine + 2 NADP(+) = 7-cyano-7-deazaguanine + 2 NADPH + 3 H(+). Its pathway is tRNA modification; tRNA-queuosine biosynthesis. In terms of biological role, catalyzes the NADPH-dependent reduction of 7-cyano-7-deazaguanine (preQ0) to 7-aminomethyl-7-deazaguanine (preQ1). This chain is NADPH-dependent 7-cyano-7-deazaguanine reductase, found in Elusimicrobium minutum (strain Pei191).